Consider the following 381-residue polypeptide: E3 ubiquitin-protein ligase At1g63170 (381 aa).

The interval 1 to 23 (MSRETTTEATPLILTDGGGGRRS) is disordered. 2 consecutive transmembrane segments (helical) span residues 74–94 (VVVL…AVLV) and 107–127 (VWII…CVEY). The disordered stretch occupies residues 135–161 (RRDLSPRSSSSSSSSSSSMDEEEGLGL). Positions 140-152 (PRSSSSSSSSSSS) are enriched in low complexity. The stretch at 170–194 (LELGQLENENNSFAKHLESANTMIS) forms a coiled coil. The next 3 helical transmembrane spans lie at 189–209 (ANTM…SSGG), 224–244 (IVFL…ACVI), and 245–265 (GIAV…VAEQ). The segment at 325-366 (CCICLSAYEDETELRELPCGHHFHCGCVDKWLYINATCPLCK) adopts an RING-type; atypical zinc-finger fold.

The protein localises to the membrane. It carries out the reaction S-ubiquitinyl-[E2 ubiquitin-conjugating enzyme]-L-cysteine + [acceptor protein]-L-lysine = [E2 ubiquitin-conjugating enzyme]-L-cysteine + N(6)-ubiquitinyl-[acceptor protein]-L-lysine.. Its pathway is protein modification; protein ubiquitination. Mediates E2-dependent protein ubiquitination. This chain is E3 ubiquitin-protein ligase At1g63170, found in Arabidopsis thaliana (Mouse-ear cress).